Consider the following 1114-residue polypeptide: Isoleucine--tRNA ligase (1114 aa).

A 'HIGH' region motif is present at residues 61–71; that stretch reads PTANGQPGTHH. The 'KMSKS' region motif lies at 640 to 644; that stretch reads KMSKH. Lysine 643 lines the ATP pocket.

It belongs to the class-I aminoacyl-tRNA synthetase family. IleS type 2 subfamily. In terms of assembly, monomer. Zn(2+) serves as cofactor.

It is found in the cytoplasm. It catalyses the reaction tRNA(Ile) + L-isoleucine + ATP = L-isoleucyl-tRNA(Ile) + AMP + diphosphate. In terms of biological role, catalyzes the attachment of isoleucine to tRNA(Ile). As IleRS can inadvertently accommodate and process structurally similar amino acids such as valine, to avoid such errors it has two additional distinct tRNA(Ile)-dependent editing activities. One activity is designated as 'pretransfer' editing and involves the hydrolysis of activated Val-AMP. The other activity is designated 'posttransfer' editing and involves deacylation of mischarged Val-tRNA(Ile). The chain is Isoleucine--tRNA ligase from Cutibacterium acnes (strain DSM 16379 / KPA171202) (Propionibacterium acnes).